The chain runs to 836 residues: CUB domain-containing protein 1 (836 aa).

The signal sequence occupies residues 1-29; it reads MAGLNCGVSIALLGVLLLGAARLPRGAEA. The Extracellular portion of the chain corresponds to 30–667; that stretch reads FEIALPRESN…TLTPRTVDLT (638 aa). Residues Asn39, Asn122, Asn180, Asn205, Asn270, Asn310, and Asn386 are each glycosylated (N-linked (GlcNAc...) asparagine). The region spanning 417-544 is the CUB domain; the sequence is CTDHRYCQRK…VSFIPYFKEE (128 aa). A disulfide bridge connects residues Cys476 and Cys499. The helical transmembrane segment at 668 to 688 threads the bilayer; that stretch reads VILIAAVGGGVLLLSALGLII. The Cytoplasmic portion of the chain corresponds to 689–836; it reads CCVKKKKKKT…NTQEPMEPAE (148 aa). Residue Tyr734 is modified to Phosphotyrosine. Residues 776 to 836 are disordered; the sequence is PPTICSRAPT…NTQEPMEPAE (61 aa).

In terms of assembly, interacts with CDH2/N-cadherin, CDH3/P-cadherin, SDC1/syndecan-1, SDC4/syndecan-4 and the serine protease ST14/MT-SP1. Also interacts with SRC and PRKCG/protein kinase C gamma. Phosphorylated on tyrosine by kinases of the SRC family such as SRC and YES as well as by the protein kinase C gamma/PRKCG. Dephosphorylated by phosphotyrosine phosphatases. Also phosphorylated by suramin, a heparin analog. Tyrosine phosphorylated in response to dissociation of integrin alpha-6 beta-4 from laminin-5. In terms of processing, N-glycosylated. Post-translationally, a soluble form may also be produced by proteolytic cleavage at the cell surface (shedding). Another peptide of 80 kDa (p80) is present in cultured keratinocytes probably due to tryptic cleavage at an unidentified site on its N-terminal side. Converted to p80 by plasmin, a trypsin-like protease. As to expression, highly expressed in mitotic cells with low expression during interphase. Detected at highest levels in skeletal muscle and colon with lower levels in kidney, small intestine, placenta and lung. Up-regulated in a number of human tumor cell lines, as well as in colorectal cancer, breast carcinoma and lung cancer. Also expressed in cells with phenotypes reminiscent of mesenchymal stem cells and neural stem cells.

Its subcellular location is the cell membrane. It localises to the secreted. Functionally, may be involved in cell adhesion and cell matrix association. May play a role in the regulation of anchorage versus migration or proliferation versus differentiation via its phosphorylation. May be a novel marker for leukemia diagnosis and for immature hematopoietic stem cell subsets. Belongs to the tetraspanin web involved in tumor progression and metastasis. This chain is CUB domain-containing protein 1 (CDCP1), found in Homo sapiens (Human).